Reading from the N-terminus, the 114-residue chain is Small ribosomal subunit protein uS17 (114 aa).

Belongs to the universal ribosomal protein uS17 family. Part of the 30S ribosomal subunit.

One of the primary rRNA binding proteins, it binds specifically to the 5'-end of 16S ribosomal RNA. This Aeropyrum pernix (strain ATCC 700893 / DSM 11879 / JCM 9820 / NBRC 100138 / K1) protein is Small ribosomal subunit protein uS17.